Reading from the N-terminus, the 509-residue chain is MSHVTGVTSNIRIKKTIDDIWPLTAKRVLVRVDFNVPIQNGHITNDYRIRATIPTIQRIIDQGGICILLSHLGRPAGISMTTAVRDVRRRYHEAHFHDNKGKTAFFSVLPPEEKIKILAQSSLREEATHIMPGVKSGKTILFARLPEDEKKQLLMQYLDEKKDNGLPQLSVSAGYEEQYSLRPVAVRLAELLGQHVYFAHDCMDAKMELSRLKRGNVMLLENVRFYREEDSKKEEEREAMAKVLASYGDIFVSDAFGTAHRDSATMTGIPKVLGHGAAGYLMEKEISYFSKVLGNPPRPLVAIVGGSKVSDKIQLLDNMLQRIDYLLIGGAMAYTFLKAQGHRIGTSMCEEDRLDLARSLLKKAEDRKVQVLLPVDHVCHTEFKAVDTPVVTADADIPDGHMALDIGPKTIANYVETIGKCKSAIWNGPMGVFEMTPYSKGTFAVAKAMGDCTQKNGLMSIIGGGDSASAAEQSGEATRMSHVSTGGGASLELLEGKTLPGVAILDDKE.

Valine 32, aspartate 33, phenylalanine 34, asparagine 35, arginine 48, serine 70, histidine 71, glycine 73, arginine 74, arginine 224, histidine 260, and arginine 261 together coordinate (2R)-3-phosphoglycerate. Glycine 306 is an ADP binding site. Glycine 306 is a binding site for CDP. Lysine 308 contacts (2R)-3-phosphoglycerate. Lysine 308 provides a ligand contact to AMP. Aspartate 311 is a binding site for CDP. Mg(2+) is bound at residue aspartate 311. Lysine 312 and glycine 330 together coordinate ADP. Lysine 312 contacts AMP. Position 312 (lysine 312) interacts with ATP. Residue glycine 330 coordinates CDP. Residues alanine 331 and alanine 403 each contribute to the AMP site. Residues alanine 331 and alanine 403 each coordinate ATP. Residues alanine 403 and asparagine 427 each contribute to the ADP site. Residues glycine 428 and phenylalanine 433 each coordinate CDP. Residues phenylalanine 433, glutamate 434, aspartate 466, and serine 467 each contribute to the ADP site. Glutamate 434 contributes to the AMP binding site. The ATP site is built by glutamate 434, aspartate 466, and serine 467. Aspartate 466 is a Mg(2+) binding site.

The protein belongs to the phosphoglycerate kinase family. As to quaternary structure, monomer. Mg(2+) is required as a cofactor.

It localises to the glycosome. It carries out the reaction (2R)-3-phosphoglycerate + ATP = (2R)-3-phospho-glyceroyl phosphate + ADP. It functions in the pathway carbohydrate degradation; glycolysis; pyruvate from D-glyceraldehyde 3-phosphate: step 2/5. This Trypanosoma congolense protein is Phosphoglycerate kinase, glycosomal (56PGK).